We begin with the raw amino-acid sequence, 357 residues long: Peptide chain release factor 1 (357 aa).

Glutamine 236 is subject to N5-methylglutamine.

It belongs to the prokaryotic/mitochondrial release factor family. In terms of processing, methylated by PrmC. Methylation increases the termination efficiency of RF1.

Its subcellular location is the cytoplasm. Functionally, peptide chain release factor 1 directs the termination of translation in response to the peptide chain termination codons UAG and UAA. The protein is Peptide chain release factor 1 (prfA) of Mycobacterium bovis (strain ATCC BAA-935 / AF2122/97).